A 142-amino-acid chain; its full sequence is Large ribosomal subunit protein uL13 (142 aa).

The protein belongs to the universal ribosomal protein uL13 family. In terms of assembly, part of the 50S ribosomal subunit.

Functionally, this protein is one of the early assembly proteins of the 50S ribosomal subunit, although it is not seen to bind rRNA by itself. It is important during the early stages of 50S assembly. The chain is Large ribosomal subunit protein uL13 from Hamiltonella defensa subsp. Acyrthosiphon pisum (strain 5AT).